A 313-amino-acid polypeptide reads, in one-letter code: uncharacterized protein (313 aa).

To B.subtilis YqxC and T.hyodysenteriae hemolysin TlyA.

This is an uncharacterized protein from Bacillus subtilis (strain 168).